The following is a 147-amino-acid chain: Small ribosomal subunit protein uS5 (147 aa).

Residues 9 to 72 form the S5 DRBM domain; that stretch reads FEEVIVDIGR…DDAFKNIVEV (64 aa).

Belongs to the universal ribosomal protein uS5 family. As to quaternary structure, part of the 30S ribosomal subunit. Contacts proteins S4 and S8.

With S4 and S12 plays an important role in translational accuracy. In terms of biological role, located at the back of the 30S subunit body where it stabilizes the conformation of the head with respect to the body. The protein is Small ribosomal subunit protein uS5 of Campylobacter jejuni subsp. jejuni serotype O:6 (strain 81116 / NCTC 11828).